Here is a 572-residue protein sequence, read N- to C-terminus: FAD-linked oxidoreductase patO (572 aa).

The first 23 residues, 1–23 (MRLSIYSSILLLRAMCLVRPTFG), serve as a signal peptide directing secretion. N-linked (GlcNAc...) asparagine glycosylation is found at N48, N71, N126, N180, N309, N354, N381, N422, N446, and N481. Positions 115–295 (CAPGDMVVYS…YSMTVKAFPD (181 aa)) constitute an FAD-binding PCMH-type domain.

It belongs to the oxygen-dependent FAD-linked oxidoreductase family. It depends on FAD as a cofactor.

Its subcellular location is the vacuole lumen. It participates in mycotoxin biosynthesis; patulin biosynthesis. Functionally, FAD-linked oxidoreductase; part of the gene cluster that mediates the biosynthesis of patulin, an acetate-derived tetraketide mycotoxin produced by several fungal species that shows antimicrobial properties against several bacteria. PatO acts with patJ in the vacuole to convert gentisyl alcohol to isoepoxydon. The pathway begins with the synthesis of 6-methylsalicylic acid by the polyketide synthase (PKS) patK via condensation of acetate and malonate units. The 6-methylsalicylic acid decarboxylase patG then catalyzes the decarboxylation of 6-methylsalicylic acid to yield m-cresol (also known as 3-methylphenol). These first reactions occur in the cytosol. The intermediate m-cresol is then transported into the endoplasmic reticulum where the cytochrome P450 monooxygenase patH converts it to m-hydroxybenzyl alcohol, which is further converted to gentisyl alcohol by the cytochrome P450 monooxygenase patI. The oxidoreductases patJ and patO further convert gentisyl alcohol to isoepoxydon in the vacuole. PatN catalyzes then the transformation of isoepoxydon into phyllostine. The cluster protein patF is responsible for the conversion from phyllostine to neopatulin whereas the alcohol dehydrogenase patD converts neopatulin to E-ascladiol. The steps between isoepoxydon and E-ascladiol occur in the cytosol, and E-ascladiol is probably secreted to the extracellular space by one of the cluster-specific transporters patC or patM. Finally, the secreted patulin synthase patE catalyzes the conversion of E-ascladiol to patulin. In Aspergillus clavatus (strain ATCC 1007 / CBS 513.65 / DSM 816 / NCTC 3887 / NRRL 1 / QM 1276 / 107), this protein is FAD-linked oxidoreductase patO.